Consider the following 162-residue polypeptide: Caveolin-2 (162 aa).

Residues 1 to 86 (MGLETEKADV…FEISKYVMYK (86 aa)) are Cytoplasmic-facing. A Phosphotyrosine; by SRC modification is found at Tyr-19. Residues Ser-20 and Ser-23 each carry the phosphoserine modification. Residue Tyr-27 is modified to Phosphotyrosine; by SRC. Ser-36 carries the post-translational modification Phosphoserine. The helical intramembrane region spans 87-107 (FLTVFLAIPLAFIAGILFATL). At 108–162 (SCLHIWILMPFVKTCLMVLPSVQTIWKSVTDVIIAPLCTSVGRCFSSVSLQLSQD) the chain is on the cytoplasmic side.

It belongs to the caveolin family. In terms of assembly, monomer or homodimer. Interacts with CAV1; the interaction forms a stable heterooligomeric complex that is required for targeting to lipid rafts and for caveolae formation. Tyrosine phosphorylated forms do not form heterooligomers with the Tyr-19-phosphorylated form existing as a monomer or dimer, and the Tyr-27-form as a monomer only. Interacts (tyrosine phosphorylated form) with the SH2 domain-containing proteins, RASA1, NCK1 and SRC. Interacts (tyrosine phosphorylated form) with INSR, the interaction (Tyr-27-phosphorylated form) is increased on insulin stimulation. Interacts (Tyr-19 phosphorylated form) with MAPK1 (phosphorylated form); the interaction, promoted by insulin, leads to nuclear location and MAPK1 activation. Interacts with STAT3; the interaction is increased on insulin-induced tyrosine phosphorylation leading to STAT activation. Phosphorylated on serine and tyrosine residues. CAV1 promotes phosphorylation on Ser-23 which then targets the complex to the plasma membrane, lipid rafts and caveolae. Phosphorylation on Ser-36 appears to modulate mitosis in endothelial cells. Phosphorylation on both Tyr-19 and Tyr-27 is required for insulin-induced 'Ser-727' phosphorylation of STAT3 and its activation. Phosphorylation on Tyr-19 is required for insulin-induced phosphorylation of MAPK1 and DNA binding of STAT3. Tyrosine phosphorylation is induced by both EGF and insulin (By. similarity).

The protein resides in the nucleus. Its subcellular location is the cytoplasm. It is found in the golgi apparatus membrane. The protein localises to the cell membrane. It localises to the membrane. The protein resides in the caveola. In terms of biological role, may act as a scaffolding protein within caveolar membranes. Interacts directly with G-protein alpha subunits and can functionally regulate their activity. Acts as an accessory protein in conjunction with CAV1 in targeting to lipid rafts and driving caveolae formation. The Ser-36 phosphorylated form has a role in modulating mitosis in endothelial cells. Positive regulator of cellular mitogenesis of the MAPK signaling pathway. Required for the insulin-stimulated nuclear translocation and activation of MAPK1 and STAT3, and the subsequent regulation of cell cycle progression. This chain is Caveolin-2 (CAV2), found in Gorilla gorilla gorilla (Western lowland gorilla).